The following is a 340-amino-acid chain: Alpha-1,4-N-acetylglucosaminyltransferase (340 aa).

At 1 to 4 (MRKE) the chain is on the cytoplasmic side. A helical; Signal-anchor for type II membrane protein transmembrane segment spans residues 5-25 (LQLSLSVTLLLVCGFLYQFTL). Over 26–340 (KSSCLFCLPS…VTGELGPGNK (315 aa)) the chain is Lumenal. N-linked (GlcNAc...) asparagine glycans are attached at residues Asn99 and Asn138. Residues 167–169 (DTD) carry the DXD motif motif. Residues Asn251 and Asn282 are each glycosylated (N-linked (GlcNAc...) asparagine).

This sequence belongs to the glycosyltransferase 32 family. As to expression, detected in stomach and pancreas.

It is found in the golgi apparatus membrane. It functions in the pathway protein modification; protein glycosylation. Its function is as follows. Catalyzes the transfer of N-acetylglucosamine (GlcNAc) to core 2 branched O-glycans. Necessary for the synthesis of type III mucin which is specifically produced in the stomach, duodenum, and pancreatic duct. May protect against inflammation-associated gastric adenocarcinomas. The sequence is that of Alpha-1,4-N-acetylglucosaminyltransferase (A4GNT) from Homo sapiens (Human).